The primary structure comprises 747 residues: MTNINYEGIEQMPLRTFTEKAYLNYSMYVIMDRALPFIGDGLKPVQRRIVYAMSELGLNATAKYKKSARTVGDVLGKFHPHGDSACYEAMVLMAQPFSYRYPLVDGQGNWGAPDDPKSFAAMRYTESRLSKISEILLNELGQGTVDYQPNFDGTLAEPQYLPARLPHILLNGTTGIAVGMATDIPPHNINEIADAAVMLLDNPKAGLDDVLEIVQGPDFPTEAEIISPKSEIRKIYEQGRGSIKMRATWKKEDGEIIISALPHQSSPSKVIAQIAEQMTAKKLPMLEDIRDEADHENPIRIVLVPRSNRVDTDALMAHLFATTDLEKSYRVNMNMIGLDHKPAVKGLLEILNEWLDFRRTTVTRRLQYRLDKVLSRLHILEGLMIAFLNIDEVIEIIRHEDDPKAELMARFNLSDEQADAILNLRLRHLAKLEENQLKAEQDELEKERLNLEAILGSERRLNTLIKKEIQEDAKKYANPRMSQLVEREEAKMISESDMTPAEPVTVILSEMGWVRCAKGHDIDPKSLSYKAGDSYLAHACGKSNQAVVFIDSTGRSYALDPLSLPSARSQGEPLTGKLNLPTGATIEYVVMASEQQELLMASDAGYGFICKFEDLIARNKAGKALISLPENAKVLKPKTLINSTALVVAITSAGRMLIFPAQDLPVLSKGKGNKMITIPAANAKDRSELLTKLLLISDQASLEFYSGKRKIVLKPEDLQKFRAERGRKGSTLPRGLHTNLEIMVIEP.

In terms of domain architecture, Topo IIA-type catalytic spans 35-498; that stretch reads LPFIGDGLKP…EAKMISESDM (464 aa). Tyr124 serves as the catalytic O-(5'-phospho-DNA)-tyrosine intermediate.

The protein belongs to the type II topoisomerase GyrA/ParC subunit family. ParC type 1 subfamily. As to quaternary structure, heterotetramer composed of ParC and ParE.

It is found in the cell membrane. The enzyme catalyses ATP-dependent breakage, passage and rejoining of double-stranded DNA.. Topoisomerase IV is essential for chromosome segregation. It relaxes supercoiled DNA. Performs the decatenation events required during the replication of a circular DNA molecule. This Haemophilus influenzae (strain ATCC 51907 / DSM 11121 / KW20 / Rd) protein is DNA topoisomerase 4 subunit A.